A 196-amino-acid polypeptide reads, in one-letter code: Carnitine operon protein CaiE (196 aa).

A disordered region spans residues 173 to 196 (TQPLRQMEENRPRLQGTTDVTPKR). A compositionally biased stretch (polar residues) spans 187 to 196 (QGTTDVTPKR).

It belongs to the transferase hexapeptide repeat family.

It participates in amine and polyamine metabolism; carnitine metabolism. Its function is as follows. Overproduction of CaiE stimulates the activity of CaiB and CaiD. This Shigella dysenteriae serotype 1 (strain Sd197) protein is Carnitine operon protein CaiE.